The sequence spans 204 residues: Glycerol-3-phosphate acyltransferase (204 aa).

Transmembrane regions (helical) follow at residues 8-28 (ILIF…CYIF), 53-73 (VPAA…VVIA), 81-101 (FITA…IFFG), 116-136 (FGFS…VAII), and 155-175 (VIFT…IIIL).

It belongs to the PlsY family. As to quaternary structure, probably interacts with PlsX.

It is found in the cell inner membrane. The enzyme catalyses an acyl phosphate + sn-glycerol 3-phosphate = a 1-acyl-sn-glycero-3-phosphate + phosphate. Its pathway is lipid metabolism; phospholipid metabolism. Its function is as follows. Catalyzes the transfer of an acyl group from acyl-phosphate (acyl-PO(4)) to glycerol-3-phosphate (G3P) to form lysophosphatidic acid (LPA). This enzyme utilizes acyl-phosphate as fatty acyl donor, but not acyl-CoA or acyl-ACP. The sequence is that of Glycerol-3-phosphate acyltransferase from Francisella tularensis subsp. tularensis (strain FSC 198).